Here is a 130-residue protein sequence, read N- to C-terminus: Small ribosomal subunit protein uS8 (130 aa).

Belongs to the universal ribosomal protein uS8 family.

The protein is Small ribosomal subunit protein uS8 (RPS22) of Candida glabrata (strain ATCC 2001 / BCRC 20586 / JCM 3761 / NBRC 0622 / NRRL Y-65 / CBS 138) (Yeast).